Here is a 317-residue protein sequence, read N- to C-terminus: Ferrochelatase (317 aa).

Residues H192 and E271 each coordinate Fe cation.

The protein belongs to the ferrochelatase family.

The protein localises to the cytoplasm. It catalyses the reaction heme b + 2 H(+) = protoporphyrin IX + Fe(2+). It functions in the pathway porphyrin-containing compound metabolism; protoheme biosynthesis; protoheme from protoporphyrin-IX: step 1/1. Functionally, catalyzes the ferrous insertion into protoporphyrin IX. This Citrifermentans bemidjiense (strain ATCC BAA-1014 / DSM 16622 / JCM 12645 / Bem) (Geobacter bemidjiensis) protein is Ferrochelatase.